A 176-amino-acid polypeptide reads, in one-letter code: Putative REP-associated tyrosine transposase (176 aa).

Residues H59 and H61 each coordinate Mg(2+). Catalysis depends on Y148, which acts as the Nucleophile.

The protein belongs to the transposase 17 family. RAYT subfamily. Homodimer. Mg(2+) serves as cofactor.

In terms of biological role, transposase responsible for transposition an insertion sequence (IS) element. Transposition occurs in 2 main steps, excision from the donor DNA 'top strand' into a single strand circle and its subsequent reinsertion into the DNA target. This increases the copy number of the IS. The sequence is that of Putative REP-associated tyrosine transposase from Haemophilus influenzae (strain ATCC 51907 / DSM 11121 / KW20 / Rd).